A 351-amino-acid polypeptide reads, in one-letter code: Calcium homeostasis modulator 1 (351 aa).

At 1–20 (MDKFRMMFQFLQSNQESFMN) the chain is on the cytoplasmic side. The interval 9 to 36 (QFLQSNQESFMNGICGIMALASAQMYSS) is central pore. A helical transmembrane segment spans residues 21-36 (GICGIMALASAQMYSS). Topologically, residues 37–48 (FEFSCPCMPEYN) are extracellular. Intrachain disulfides connect C41/C126 and C43/C160. A helical transmembrane segment spans residues 49–71 (YTYGIGLLIIPPIWFFLLGFVLN). The interval 62 to 69 (WFFLLGFV) is phospholipid-binding. Topologically, residues 72-98 (NNVSVLAEEWKRPTGRRTKDPSVLRYM) are cytoplasmic. A helical transmembrane segment spans residues 99–124 (LCSITQRSLIAPAVWVSVTLMDGKSF). Residue C100 is the site of S-palmitoyl cysteine attachment. Residues 104–116 (QRSLIAPAVWVSV) are phospholipid-binding. Residues 125 to 177 (LCAFSINLDIEKFGNASLVIGMTETEKLKFLARIPCKDLFEDNEVRVAATRYI) are Extracellular-facing. N139 is a glycosylation site (N-linked (GlcNAc...) asparagine). The chain crosses the membrane as a helical span at residues 178-203 (KCISQACGWMFLLMMTFTAFLIRAIR). The tract at residues 189 to 199 (LLMMTFTAFLI) is phospholipid-binding. At 204–351 (PCFTQAAFLK…KEWAVYYSKV (148 aa)) the chain is on the cytoplasmic side. The S-palmitoyl cysteine moiety is linked to residue C205. Positions 259–281 (HRHQSKDTSDAEEEEKQRSDEDK) are disordered. Over residues 263–281 (SKDTSDAEEEEKQRSDEDK) the composition is skewed to basic and acidic residues.

It belongs to the CALHM family. Oligomerizes to form hexamers and octamers. Does not form gap junctions. Associates with CALHM3 as a pore-forming subunit in a hetero-hexameric channel complex. N-glycosylated. Post-translationally, palmitoylated.

The protein localises to the cell membrane. Its subcellular location is the endoplasmic reticulum membrane. It is found in the basolateral cell membrane. The catalysed reaction is ATP(in) = ATP(out). It carries out the reaction Ca(2+)(in) = Ca(2+)(out). The enzyme catalyses Mg(2+)(in) = Mg(2+)(out). It catalyses the reaction Na(+)(in) = Na(+)(out). The catalysed reaction is K(+)(in) = K(+)(out). It carries out the reaction Li(+)(in) = Li(+)(out). The enzyme catalyses Rb(+)(in) = Rb(+)(out). It catalyses the reaction Cs(+)(in) = Cs(+)(out). The catalysed reaction is chloride(in) = chloride(out). Its activity is regulated as follows. Activated in response to membrane depolarization and low extracellular Ca(2+) concentration. Inhibited by ruthenium red. Functionally, pore-forming subunit of a voltage-gated ion channel. Has poor ion selectivity and forms a wide pore that mediates permeation of small ions including Ca(2+), Na(+), K(+) and Cl(-), as well as larger ions such as ATP(4-). The sequence is that of Calcium homeostasis modulator 1 from Oryzias latipes (Japanese rice fish).